We begin with the raw amino-acid sequence, 810 residues long: Soluble starch synthase 2-3, chloroplastic/amyloplastic (810 aa).

The transit peptide at 1 to 16 (MSSAVVASSTTFLVAL) directs the protein to the chloroplast. Disordered stretches follow at residues 43 to 265 (GRAG…PIPA) and 281 to 313 (EPDAAEDGDDDDDWADSDASDSEIDQDDDSGPL). Residues 63 to 83 (RDAGVVRRADDGENEAAVERA) are compositionally biased toward basic and acidic residues. Acidic residues predominate over residues 84 to 93 (GEDDEEEEEF). Residues 102-116 (RSRRGGVGKVLKRRG) are compositionally biased toward basic residues. The span at 129-148 (DAARVRGAAAPAPAPTQDAA) shows a compositional bias: low complexity. Over residues 281–310 (EPDAAEDGDDDDDWADSDASDSEIDQDDDS) the composition is skewed to acidic residues. ADP-alpha-D-glucose is bound at residue Lys333.

Belongs to the glycosyltransferase 1 family. Bacterial/plant glycogen synthase subfamily. Expressed most exclusively in endosperm.

The protein localises to the plastid. It localises to the amyloplast. Its subcellular location is the chloroplast. The catalysed reaction is [(1-&gt;4)-alpha-D-glucosyl](n) + ADP-alpha-D-glucose = [(1-&gt;4)-alpha-D-glucosyl](n+1) + ADP + H(+). It participates in glycan biosynthesis; starch biosynthesis. Plays an important role during endosperm starch synthesis. Determines the type of amylopectin structure of starch grain. Synthesizes long B1 amylopectin chains by elongating short A and B1 chains, independently of the other soluble starch synthases. Barely active in japonica subspecies. The protein is Soluble starch synthase 2-3, chloroplastic/amyloplastic (SSII-3) of Oryza sativa subsp. indica (Rice).